The sequence spans 180 residues: ATP synthase subunit delta (180 aa).

The protein belongs to the ATPase delta chain family. In terms of assembly, F-type ATPases have 2 components, F(1) - the catalytic core - and F(0) - the membrane proton channel. F(1) has five subunits: alpha(3), beta(3), gamma(1), delta(1), epsilon(1). F(0) has three main subunits: a(1), b(2) and c(10-14). The alpha and beta chains form an alternating ring which encloses part of the gamma chain. F(1) is attached to F(0) by a central stalk formed by the gamma and epsilon chains, while a peripheral stalk is formed by the delta and b chains.

The protein resides in the cell inner membrane. F(1)F(0) ATP synthase produces ATP from ADP in the presence of a proton or sodium gradient. F-type ATPases consist of two structural domains, F(1) containing the extramembraneous catalytic core and F(0) containing the membrane proton channel, linked together by a central stalk and a peripheral stalk. During catalysis, ATP synthesis in the catalytic domain of F(1) is coupled via a rotary mechanism of the central stalk subunits to proton translocation. In terms of biological role, this protein is part of the stalk that links CF(0) to CF(1). It either transmits conformational changes from CF(0) to CF(1) or is implicated in proton conduction. The sequence is that of ATP synthase subunit delta from Cupriavidus necator (strain ATCC 17699 / DSM 428 / KCTC 22496 / NCIMB 10442 / H16 / Stanier 337) (Ralstonia eutropha).